The chain runs to 962 residues: Cohesin subunit psc3 (962 aa).

A disordered region spans residues 1 to 72 (MSESVTTGSD…GVNVKRSRRN (72 aa)). A compositionally biased stretch (polar residues) spans 21–30 (VMLSQSFDPM). Positions 51–71 (SSKKRHPRPNSKGVNVKRSRR) are enriched in basic residues. A coiled-coil region spans residues 236 to 275 (LCEKSKELLNEHAIATKQLEKEEKRSRVNRNRINELNNSL). Residues 297–382 (FVHRYRDVEP…SRFKERILEM (86 aa)) form the SCD domain.

The protein belongs to the SCC3 family. As to quaternary structure, cohesin complexes are composed of the psm1/smc1 and psm3/smc3 heterodimer attached via their hinge domain, rad21/scc1 which link them, and psc3/scc3, which interacts with rad21. Interacts with swi6. The interaction with swi6 may contribute to recruit cohesin complex to heterochromatin.

It localises to the nucleus. It is found in the chromosome. The protein localises to the centromere. In terms of biological role, component of cohesin complex, a complex required for the cohesion of sister chromatids after DNA replication. The cohesin complex apparently forms a large proteinaceous ring within which sister chromatids can be trapped. At anaphase, the rad21 subunit of the cohesin complex is cleaved and dissociates from chromatin, allowing sister chromatids to segregate. The cohesin complex may also play a role in spindle pole assembly during mitosis. The polypeptide is Cohesin subunit psc3 (psc3) (Schizosaccharomyces pombe (strain 972 / ATCC 24843) (Fission yeast)).